We begin with the raw amino-acid sequence, 489 residues long: GTPase Der (489 aa).

2 consecutive EngA-type G domains span residues 30–199 (PVVS…KDKP) and 227–403 (FRLA…SRSH). Residues 36 to 43 (GRQNVGKS), 85 to 89 (DTPGL), 151 to 154 (NKAD), 233 to 240 (GKPNSGKS), 280 to 284 (DTAGI), and 345 to 348 (NKWD) contribute to the GTP site. The KH-like domain maps to 404–488 (RKVSTSELNK…PIRLEFRSDR (85 aa)).

This sequence belongs to the TRAFAC class TrmE-Era-EngA-EngB-Septin-like GTPase superfamily. EngA (Der) GTPase family. As to quaternary structure, associates with the 50S ribosomal subunit.

GTPase that plays an essential role in the late steps of ribosome biogenesis. The sequence is that of GTPase Der from Leptospira interrogans serogroup Icterohaemorrhagiae serovar copenhageni (strain Fiocruz L1-130).